We begin with the raw amino-acid sequence, 325 residues long: Heat-inducible transcription repressor HrcA (325 aa).

The protein belongs to the HrcA family.

Negative regulator of class I heat shock genes (grpE-dnaK-dnaJ and groELS operons). Prevents heat-shock induction of these operons. The chain is Heat-inducible transcription repressor HrcA from Staphylococcus haemolyticus (strain JCSC1435).